The primary structure comprises 39 residues: Mu-theraphotoxin-Ae1a (39 aa).

Cystine bridges form between Cys-7/Cys-21, Cys-14/Cys-26, and Cys-20/Cys-33. Phe-39 bears the Phenylalanine amide mark.

It belongs to the neurotoxin 10 (Hwtx-1) family. 47 subfamily. As to expression, expressed by the venom gland.

Its subcellular location is the secreted. Insecticidal toxin that acts, at least partially, by inhibiting insect voltage-gated sodium (NaV) channels of several insect species. The toxin binds to the voltage sensor in NaV channel domain II and inhibits channel opening by shifting the threshold for channel activation to more positive voltages. The toxin binding is sensitive to residues in the S1-S2 loop of the domain II voltage sensor. In vivo, the recombinant toxin causes paralysis and/or death to two dipteran species (Lucilia cuprina and Drosophila melanogaster). In contrast, the toxin does not show paralytic or lethal effect on the cotton bollworm Helicoverpa armigera and the triatomine bug Rhodinius prolixus. In Augacephalus ezendami (Mozambique baboon spider), this protein is Mu-theraphotoxin-Ae1a.